We begin with the raw amino-acid sequence, 208 residues long: Holliday junction branch migration complex subunit RuvA (208 aa).

Residues 1–64 (MIGRLHGTVA…DDGQALYGFA (64 aa)) are domain I. The tract at residues 65–143 (SRAERDLFRV…GLLPAASGGV (79 aa)) is domain II. Positions 139–162 (ASGGVPARTGSGEQLDAPAGPQGS) are disordered. The segment at 144–157 (PARTGSGEQLDAPA) is flexible linker. Residues 158–208 (GPQGSREDAVSALVALGYKPAEAGRLVNAVPGANDLPSEELIRRALQAAVR) form a domain III region.

Belongs to the RuvA family. Homotetramer. Forms an RuvA(8)-RuvB(12)-Holliday junction (HJ) complex. HJ DNA is sandwiched between 2 RuvA tetramers; dsDNA enters through RuvA and exits via RuvB. An RuvB hexamer assembles on each DNA strand where it exits the tetramer. Each RuvB hexamer is contacted by two RuvA subunits (via domain III) on 2 adjacent RuvB subunits; this complex drives branch migration. In the full resolvosome a probable DNA-RuvA(4)-RuvB(12)-RuvC(2) complex forms which resolves the HJ.

Its subcellular location is the cytoplasm. Its function is as follows. The RuvA-RuvB-RuvC complex processes Holliday junction (HJ) DNA during genetic recombination and DNA repair, while the RuvA-RuvB complex plays an important role in the rescue of blocked DNA replication forks via replication fork reversal (RFR). RuvA specifically binds to HJ cruciform DNA, conferring on it an open structure. The RuvB hexamer acts as an ATP-dependent pump, pulling dsDNA into and through the RuvAB complex. HJ branch migration allows RuvC to scan DNA until it finds its consensus sequence, where it cleaves and resolves the cruciform DNA. The sequence is that of Holliday junction branch migration complex subunit RuvA from Alkalilimnicola ehrlichii (strain ATCC BAA-1101 / DSM 17681 / MLHE-1).